We begin with the raw amino-acid sequence, 495 residues long: Meiosis-specific nuclear structural protein 1 (495 aa).

The segment at 1–315 (MASIRRTLSF…RLEEMLRQRE (315 aa)) is interaction with BBOF1. Coiled-coil stretches lie at residues 61–215 (QDEQ…EKLM) and 245–361 (IEEF…QMAL). The tract at residues 172–199 (EESAAEDKRNQAKAQYSHDLEKQLEEQG) is disordered.

The protein belongs to the MNS1 family. In terms of assembly, able to form oligomers. Microtubule inner protein component of sperm flagellar doublet microtubules. Interacts with ODAD1. Interacts with BBOF1. In terms of tissue distribution, expressed in trachea multiciliated cells.

It is found in the nucleus. The protein localises to the cytoplasm. Its subcellular location is the cytoskeleton. It localises to the cilium axoneme. The protein resides in the flagellum axoneme. Microtubule inner protein (MIP) part of the dynein-decorated doublet microtubules (DMTs) in cilia axoneme, which is required for motile cilia beating. May play a role in the control of meiotic division and germ cell differentiation through regulation of pairing and recombination during meiosis. Required for sperm flagella assembly. May play a role in the assembly and function of the outer dynein arm-docking complex (ODA-DC). ODA-DC mediates outer dynein arms (ODA) binding onto the axonemal doublet microtubules. In Bos taurus (Bovine), this protein is Meiosis-specific nuclear structural protein 1 (MNS1).